The primary structure comprises 212 residues: Pyridoxine/pyridoxamine 5'-phosphate oxidase (212 aa).

Residues 8–11 (RTNY) and lysine 66 each bind substrate. FMN contacts are provided by residues 61–66 (RIVLLK), 76–77 (FT), lysine 83, and glutamine 105. Positions 123, 127, and 131 each coordinate substrate. FMN-binding positions include 140–141 (QS) and tryptophan 185. A substrate-binding site is contributed by 191-193 (RLH). Residue arginine 195 coordinates FMN.

It belongs to the pyridoxamine 5'-phosphate oxidase family. Homodimer. Requires FMN as cofactor.

It catalyses the reaction pyridoxamine 5'-phosphate + O2 + H2O = pyridoxal 5'-phosphate + H2O2 + NH4(+). The enzyme catalyses pyridoxine 5'-phosphate + O2 = pyridoxal 5'-phosphate + H2O2. Its pathway is cofactor metabolism; pyridoxal 5'-phosphate salvage; pyridoxal 5'-phosphate from pyridoxamine 5'-phosphate: step 1/1. It participates in cofactor metabolism; pyridoxal 5'-phosphate salvage; pyridoxal 5'-phosphate from pyridoxine 5'-phosphate: step 1/1. Functionally, catalyzes the oxidation of either pyridoxine 5'-phosphate (PNP) or pyridoxamine 5'-phosphate (PMP) into pyridoxal 5'-phosphate (PLP). This is Pyridoxine/pyridoxamine 5'-phosphate oxidase from Leptospira biflexa serovar Patoc (strain Patoc 1 / Ames).